A 435-amino-acid chain; its full sequence is MNDTSIIILAAGLGTRMKSKRPKVLFELCGEPMIIHILKQAYAITNDVGVVLHYEKELISQKIKEIFPQTKIYTQDLENFPGTAGALKNATLSGKKVIVTCGDMPLVRSTDLMRLANADADIAMSCFEAANPFGYGRVIIKGGKVGAIVEQKDASEAELAIKSVNAGCYCFKREILEEILPLIKNKNTQKEFYLTDTIKIANERGFKCVAVNVSEQNFMGINDKFQLSVAEKIMQDEIKQDLMKAGVLMRLPESIFIDSRAKFEGECVLEENVSIMGACHIKESIIKSCSVIEDSVIEGSDIGPLAHIRPKSEIKNTHIGNFVEVKKGVLDGVKAGHLSYLGDCEIASGTNVGCGTITCNYDGKAKYKTTIGKNVFIGSDTQLVAPVNIADDVIIAAGSTITNDVPSGALAISRGKQENKAGFFYKFFGKNNAEK.

The pyrophosphorylase stretch occupies residues 1-224 (MNDTSIIILA…EQNFMGINDK (224 aa)). Residues 9–12 (LAAG), K23, Q75, and 82–83 (GT) each bind UDP-N-acetyl-alpha-D-glucosamine. Mg(2+) is bound at residue D103. 4 residues coordinate UDP-N-acetyl-alpha-D-glucosamine: G136, E150, N165, and N222. Position 222 (N222) interacts with Mg(2+). Residues 225–245 (FQLSVAEKIMQDEIKQDLMKA) form a linker region. The segment at 246–435 (GVLMRLPESI…KFFGKNNAEK (190 aa)) is N-acetyltransferase. Positions 309 and 326 each coordinate UDP-N-acetyl-alpha-D-glucosamine. The Proton acceptor role is filled by H337. UDP-N-acetyl-alpha-D-glucosamine contacts are provided by Y340 and N351. Acetyl-CoA is bound by residues 360–361 (NY), S379, A397, and R414.

In the N-terminal section; belongs to the N-acetylglucosamine-1-phosphate uridyltransferase family. The protein in the C-terminal section; belongs to the transferase hexapeptide repeat family. In terms of assembly, homotrimer. It depends on Mg(2+) as a cofactor.

Its subcellular location is the cytoplasm. It catalyses the reaction alpha-D-glucosamine 1-phosphate + acetyl-CoA = N-acetyl-alpha-D-glucosamine 1-phosphate + CoA + H(+). It carries out the reaction N-acetyl-alpha-D-glucosamine 1-phosphate + UTP + H(+) = UDP-N-acetyl-alpha-D-glucosamine + diphosphate. It functions in the pathway nucleotide-sugar biosynthesis; UDP-N-acetyl-alpha-D-glucosamine biosynthesis; N-acetyl-alpha-D-glucosamine 1-phosphate from alpha-D-glucosamine 6-phosphate (route II): step 2/2. Its pathway is nucleotide-sugar biosynthesis; UDP-N-acetyl-alpha-D-glucosamine biosynthesis; UDP-N-acetyl-alpha-D-glucosamine from N-acetyl-alpha-D-glucosamine 1-phosphate: step 1/1. The protein operates within bacterial outer membrane biogenesis; LPS lipid A biosynthesis. Catalyzes the last two sequential reactions in the de novo biosynthetic pathway for UDP-N-acetylglucosamine (UDP-GlcNAc). The C-terminal domain catalyzes the transfer of acetyl group from acetyl coenzyme A to glucosamine-1-phosphate (GlcN-1-P) to produce N-acetylglucosamine-1-phosphate (GlcNAc-1-P), which is converted into UDP-GlcNAc by the transfer of uridine 5-monophosphate (from uridine 5-triphosphate), a reaction catalyzed by the N-terminal domain. The chain is Bifunctional protein GlmU from Campylobacter curvus (strain 525.92).